The following is a 331-amino-acid chain: Serpentine receptor class alpha-1 (331 aa).

7 consecutive transmembrane segments (helical) span residues 22-42, 57-77, 104-124, 143-163, 189-209, 238-258, and 274-294; these read FAVF…VIAV, IILV…AIIS, YTEV…GILI, VGII…QIII, FLFI…AVMF, ICVV…GVLI, and LITW…ILIF.

This sequence belongs to the nematode receptor-like protein sra family.

It is found in the membrane. This chain is Serpentine receptor class alpha-1 (sra-1), found in Caenorhabditis elegans.